Here is a 465-residue protein sequence, read N- to C-terminus: Argininosuccinate lyase (465 aa).

Belongs to the lyase 1 family. Argininosuccinate lyase subfamily.

The protein resides in the cytoplasm. It catalyses the reaction 2-(N(omega)-L-arginino)succinate = fumarate + L-arginine. The protein operates within amino-acid biosynthesis; L-arginine biosynthesis; L-arginine from L-ornithine and carbamoyl phosphate: step 3/3. The sequence is that of Argininosuccinate lyase from Methanosphaera stadtmanae (strain ATCC 43021 / DSM 3091 / JCM 11832 / MCB-3).